A 167-amino-acid polypeptide reads, in one-letter code: MCWRPLCRFLWLWSYLSYVQAVPIHKVQDDTKTLIKTIVTRINDISHTQSVSARQRVTGLDFIPGLHPILSLSKMDQTLAVYQQILTSLPSQNVLQIAHDLENLRDLLHLLAFSKSCSLPQTRGLQKPESLDGVLEASLYSTEVVALSRLQGSLQDILQQLDLSPEC.

An N-terminal signal peptide occupies residues Met1 to Ala21. Cys117 and Cys167 are oxidised to a cystine.

The protein belongs to the leptin family.

The protein localises to the secreted. Functionally, key player in the regulation of energy balance and body weight control. Once released into the circulation, has central and peripheral effects by binding LEPR, found in many tissues, which results in the activation of several major signaling pathways. In the hypothalamus, acts as an appetite-regulating factor that induces a decrease in food intake and an increase in energy consumption by inducing anorexinogenic factors and suppressing orexigenic neuropeptides, also regulates bone mass and secretion of hypothalamo-pituitary-adrenal hormones. In the periphery, increases basal metabolism, influences reproductive function, regulates pancreatic beta-cell function and insulin secretion, is pro-angiogenic for endothelial cell and affects innate and adaptive immunity. In the arcuate nucleus of the hypothalamus, activates by depolarization POMC neurons inducing FOS and SOCS3 expression to release anorexigenic peptides and inhibits by hyperpolarization NPY neurons inducing SOCS3 with a consequent reduction on release of orexigenic peptides. In addition to its known satiety inducing effect, has a modulatory role in nutrient absorption. In the intestine, reduces glucose absorption by enterocytes by activating PKC and leading to a sequential activation of p38, PI3K and ERK signaling pathways which exerts an inhibitory effect on glucose absorption. Acts as a growth factor on certain tissues, through the activation of different signaling pathways increases expression of genes involved in cell cycle regulation such as CCND1, via JAK2-STAT3 pathway, or VEGFA, via MAPK1/3 and PI3K-AKT1 pathways. May also play an apoptotic role via JAK2-STAT3 pathway and up-regulation of BIRC5 expression. Pro-angiogenic, has mitogenic activity on vascular endothelial cells and plays a role in matrix remodeling by regulating the expression of matrix metalloproteinases (MMPs) and tissue inhibitors of metalloproteinases (TIMPs). In innate immunity, modulates the activity and function of neutrophils by increasing chemotaxis and the secretion of oxygen radicals. Increases phagocytosis by macrophages and enhances secretion of pro-inflammatory mediators. Increases cytotoxic ability of NK cells. Plays a pro-inflammatory role, in synergy with IL1B, by inducing NOS2 which promotes the production of IL6, IL8 and Prostaglandin E2, through a signaling pathway that involves JAK2, PI3K, MAP2K1/MEK1 and MAPK14/p38. In adaptive immunity, promotes the switch of memory T-cells towards T helper-1 cell immune responses. Increases CD4(+)CD25(-) T-cell proliferation and reduces autophagy during TCR (T-cell receptor) stimulation, through MTOR signaling pathway activation and BCL2 up-regulation. In Rattus norvegicus (Rat), this protein is Leptin (Lep).